The sequence spans 499 residues: 2,3-bisphosphoglycerate-independent phosphoglycerate mutase (499 aa).

Positions 10 and 60 each coordinate Mn(2+). Ser60 acts as the Phosphoserine intermediate in catalysis. Residues His121, 151 to 152 (RD), Arg182, Arg188, 253 to 256 (RPDR), and Lys326 each bind substrate. The Mn(2+) site is built by Asp391, His395, Asp434, His435, and His452.

This sequence belongs to the BPG-independent phosphoglycerate mutase family. As to quaternary structure, monomer. Mn(2+) serves as cofactor.

The enzyme catalyses (2R)-2-phosphoglycerate = (2R)-3-phosphoglycerate. The protein operates within carbohydrate degradation; glycolysis; pyruvate from D-glyceraldehyde 3-phosphate: step 3/5. Functionally, catalyzes the interconversion of 2-phosphoglycerate and 3-phosphoglycerate. This Metamycoplasma hominis (strain ATCC 23114 / DSM 25592 / NBRC 14850 / NCTC 10111 / PG21) (Mycoplasma hominis) protein is 2,3-bisphosphoglycerate-independent phosphoglycerate mutase.